A 206-amino-acid polypeptide reads, in one-letter code: Large ribosomal subunit protein uL4 (206 aa).

Residues 43 to 78 form a disordered region; sequence NQRQGTHDTKTRAEVRGGGRKPWRQKGTGRARAGSS. The span at 47 to 59 shows a compositional bias: basic and acidic residues; that stretch reads GTHDTKTRAEVRG. A compositionally biased stretch (basic residues) spans 60-71; sequence GGRKPWRQKGTG.

It belongs to the universal ribosomal protein uL4 family. As to quaternary structure, part of the 50S ribosomal subunit.

Functionally, one of the primary rRNA binding proteins, this protein initially binds near the 5'-end of the 23S rRNA. It is important during the early stages of 50S assembly. It makes multiple contacts with different domains of the 23S rRNA in the assembled 50S subunit and ribosome. Forms part of the polypeptide exit tunnel. This is Large ribosomal subunit protein uL4 from Desulforamulus reducens (strain ATCC BAA-1160 / DSM 100696 / MI-1) (Desulfotomaculum reducens).